Reading from the N-terminus, the 625-residue chain is Grainyhead-like protein 2 homolog (625 aa).

Residues 1–93 (MSQESDNNKR…KASDSQEDQD (93 aa)) are transcription activation. 2 disordered regions span residues 198–222 (ASHSSYLKDDQRSTPDSTYSESFKD) and 428–452 (EERKQNRKKGKGQASQAQCNNSSDG). The Grh/CP2 DB domain maps to 244 to 482 (GSGTFQYTLE…DLHSQPVLFI (239 aa)). Residues 440–451 (QASQAQCNNSSD) are compositionally biased toward polar residues.

It belongs to the grh/CP2 family. Grainyhead subfamily. In terms of assembly, homodimer, also forms heterodimers with GRHL1 or GRHL3.

It localises to the nucleus. It is found in the membrane. In terms of biological role, transcription factor playing an important role in primary neurulation and in epithelial development. Binds directly to the consensus DNA sequence 5'-AACCGGTT-3' acting as an activator and repressor on distinct target genes. During embryogenesis, plays unique and cooperative roles with GRHL3 in establishing distinct zones of primary neurulation. Essential for closure 3 (rostral end of the forebrain), functions cooperatively with GRHL3 in closure 2 (forebrain/midbrain boundary) and posterior neuropore closure. Regulates epithelial morphogenesis acting as a target gene-associated transcriptional activator of apical junctional complex components. Up-regulates of CLDN3 and CLDN4, as well as of RAB25, which increases the CLDN4 protein and its localization at tight junctions. Comprises an essential component of the transcriptional machinery that establishes appropriate expression levels of CLDN4 and CDH1 in different types of epithelia. Exhibits functional redundancy with GRHL3 in epidermal morphogenetic events such as eyelid fusion and epidermal wound repair. In lung, forms a regulatory loop with NKX2-1 that coordinates lung epithelial cell morphogenesis and differentiation. In keratinocytes, plays a role in telomerase activation during cellular proliferation, regulates TERT expression by binding to TERT promoter region and inhibiting DNA methylation at the 5'-CpG island, possibly by interfering with DNMT1 enzyme activity. In addition, impairs keratinocyte differentiation and epidermal function by inhibiting the expression of genes clustered at the epidermal differentiation complex (EDC) as well as GRHL1 and GRHL3 through epigenetic mechanisms. In Mus musculus (Mouse), this protein is Grainyhead-like protein 2 homolog (Grhl2).